A 1061-amino-acid chain; its full sequence is Isoleucine--tRNA ligase (1061 aa).

The 'HIGH' region motif lies at 50–60 (PYTSGSAHMGT). The 'KMSKS' region signature appears at 604–608 (KMSKS). ATP is bound at residue Lys607.

This sequence belongs to the class-I aminoacyl-tRNA synthetase family. IleS type 2 subfamily. Monomer. It depends on Zn(2+) as a cofactor.

The protein resides in the cytoplasm. The catalysed reaction is tRNA(Ile) + L-isoleucine + ATP = L-isoleucyl-tRNA(Ile) + AMP + diphosphate. In terms of biological role, catalyzes the attachment of isoleucine to tRNA(Ile). As IleRS can inadvertently accommodate and process structurally similar amino acids such as valine, to avoid such errors it has two additional distinct tRNA(Ile)-dependent editing activities. One activity is designated as 'pretransfer' editing and involves the hydrolysis of activated Val-AMP. The other activity is designated 'posttransfer' editing and involves deacylation of mischarged Val-tRNA(Ile). The chain is Isoleucine--tRNA ligase from Natronomonas pharaonis (strain ATCC 35678 / DSM 2160 / CIP 103997 / JCM 8858 / NBRC 14720 / NCIMB 2260 / Gabara) (Halobacterium pharaonis).